The chain runs to 205 residues: Phosphoribosyl-dephospho-CoA transferase (205 aa).

Catalysis depends on residues D134 and D136.

It belongs to the MdcG family.

It catalyses the reaction apo-[malonate decarboxylase ACP] + 2'-(5''-triphospho-alpha-D-ribosyl)-3'-dephospho-CoA = holo-[malonate decarboxylase ACP] + diphosphate. In terms of biological role, transfers 2'-(5-triphosphoribosyl)-3'-dephosphocoenzyme-A to the apo-[acyl-carrier-protein] of the malonate decarboxylase to yield holo-[acyl-carrier-protein]. In Klebsiella pneumoniae (strain 342), this protein is Phosphoribosyl-dephospho-CoA transferase.